The chain runs to 387 residues: Carboxyaminopropylagmatine decarboxylase (387 aa).

K52 carries the post-translational modification N6-(pyridoxal phosphate)lysine.

The protein belongs to the Orn/Lys/Arg decarboxylase class-II family. The cofactor is pyridoxal 5'-phosphate.

It carries out the reaction N(1)-[(S)-3-amino-3-carboxypropyl]agmatine + H(+) = N(1)-(3-aminopropyl)agmatine + CO2. Its pathway is amine and polyamine biosynthesis; spermidine biosynthesis. Decarboxylase involved in the biosynthesis of spermidine via the carboxyaminopropylagmatine (CAPA) pathway. Catalyzes the decarboxylation of CAPA to form aminopropylagmatine (APA). Can also decarboxylate carboxyspermidine and carboxynorspermidine, but not ornithine, arginine, lysine and meso-diaminopimelate. This Synechocystis sp. (strain ATCC 27184 / PCC 6803 / Kazusa) protein is Carboxyaminopropylagmatine decarboxylase.